A 132-amino-acid polypeptide reads, in one-letter code: Small ribosomal subunit protein uS8 (132 aa).

The protein belongs to the universal ribosomal protein uS8 family. In terms of assembly, part of the 30S ribosomal subunit. Contacts proteins S5 and S12.

Functionally, one of the primary rRNA binding proteins, it binds directly to 16S rRNA central domain where it helps coordinate assembly of the platform of the 30S subunit. The sequence is that of Small ribosomal subunit protein uS8 from Mycobacterium leprae (strain Br4923).